The chain runs to 152 residues: uncharacterized protein (152 aa).

The signal sequence occupies residues 1 to 24; that stretch reads MRKMLAYTLYIVTYLTYIMNEVEC.

This is an uncharacterized protein from Acheta domesticus (House cricket).